We begin with the raw amino-acid sequence, 183 residues long: Small ribosomal subunit protein uS4c (183 aa).

Residues 82 to 143 (MRLDNILFRL…KQRSKALIQN (62 aa)) form the S4 RNA-binding domain.

The protein belongs to the universal ribosomal protein uS4 family. As to quaternary structure, part of the 30S ribosomal subunit. Contacts protein S5. The interaction surface between S4 and S5 is involved in control of translational fidelity.

Its subcellular location is the plastid. The protein localises to the chloroplast. Functionally, one of the primary rRNA binding proteins, it binds directly to 16S rRNA where it nucleates assembly of the body of the 30S subunit. In terms of biological role, with S5 and S12 plays an important role in translational accuracy. The sequence is that of Small ribosomal subunit protein uS4c (rps4) from Babiana stricta (Baboon flower).